The sequence spans 212 residues: 3-demethoxyubiquinol 3-hydroxylase (212 aa).

Positions 61, 91, 94, 143, 175, and 178 each coordinate Fe cation.

Belongs to the COQ7 family. The cofactor is Fe cation.

It is found in the cell membrane. The enzyme catalyses a 5-methoxy-2-methyl-3-(all-trans-polyprenyl)benzene-1,4-diol + AH2 + O2 = a 3-demethylubiquinol + A + H2O. Its pathway is cofactor biosynthesis; ubiquinone biosynthesis. Its function is as follows. Catalyzes the hydroxylation of 2-nonaprenyl-3-methyl-6-methoxy-1,4-benzoquinol during ubiquinone biosynthesis. This chain is 3-demethoxyubiquinol 3-hydroxylase, found in Methylibium petroleiphilum (strain ATCC BAA-1232 / LMG 22953 / PM1).